Reading from the N-terminus, the 586-residue chain is Acyl-coenzyme A synthetase ACSM3, mitochondrial (586 aa).

The N-terminal 27 residues, 1 to 27 (MLARVTRKMLRHAKCFQRLAIFGSVRA), are a transit peptide targeting the mitochondrion. N6-succinyllysine occurs at positions 73 and 106. An N6-acetyllysine modification is found at lysine 157. ATP contacts are provided by residues 235 to 243 (TSGTSGYPK), 374 to 379 (EGYGQT), aspartate 461, arginine 476, and lysine 572.

The protein belongs to the ATP-dependent AMP-binding enzyme family. Mg(2+) is required as a cofactor. Mn(2+) serves as cofactor.

It localises to the mitochondrion. It is found in the mitochondrion matrix. The catalysed reaction is a medium-chain fatty acid + ATP + CoA = a medium-chain fatty acyl-CoA + AMP + diphosphate. The enzyme catalyses propanoate + ATP + CoA = propanoyl-CoA + AMP + diphosphate. It catalyses the reaction butanoate + ATP + CoA = butanoyl-CoA + AMP + diphosphate. It carries out the reaction 2-methylpropanoate + ATP + CoA = 2-methylpropanoyl-CoA + AMP + diphosphate. The catalysed reaction is 2-methylbutanoate + ATP + CoA = 2-methylbutanoyl-CoA + AMP + diphosphate. The enzyme catalyses octanoate + ATP + CoA = octanoyl-CoA + AMP + diphosphate. Its function is as follows. Catalyzes the activation of fatty acids by CoA to produce an acyl-CoA, the first step in fatty acid metabolism. Capable of activating medium-chain fatty acids with a preference for isobutyrate among fatty acids with 2-6 carbon atoms. The polypeptide is Acyl-coenzyme A synthetase ACSM3, mitochondrial (ACSM3) (Homo sapiens (Human)).